A 3390-amino-acid polypeptide reads, in one-letter code: Genome polyprotein (3390 aa).

The interaction with host EXOC1 stretch occupies residues methionine 1–methionine 15. The Cytoplasmic portion of the chain corresponds to methionine 1 to lysine 100. Residues leucine 37 to phenylalanine 72 are hydrophobic; homodimerization of capsid protein C. The propeptide at threonine 101–alanine 114 is ER anchor for the capsid protein C, removed in mature form by serine protease NS3. A helical transmembrane segment spans residues threonine 101–arginine 120. The Extracellular portion of the chain corresponds to aspartate 121–arginine 243. Residue asparagine 183 is glycosylated (N-linked (GlcNAc...) asparagine; by host). A helical transmembrane segment spans residues histidine 244–glutamine 264. Residue lysine 265 is a topological domain, cytoplasmic. The chain crosses the membrane as a helical span at residues valine 266 to threonine 280. The Extracellular portion of the chain corresponds to methionine 281–threonine 723. Intrachain disulfides connect cysteine 283–cysteine 310, cysteine 340–cysteine 401, cysteine 354–cysteine 385, and cysteine 372–cysteine 396. Asparagine 347 is a glycosylation site (N-linked (GlcNAc...) asparagine; by host). The segment at aspartate 378–glycine 391 is fusion peptide. Residue asparagine 433 is glycosylated (N-linked (GlcNAc...) asparagine; by host). Cystine bridges form between cysteine 463-cysteine 563 and cysteine 580-cysteine 611. Residues alanine 724–isoleucine 744 traverse the membrane as a helical segment. The Cytoplasmic portion of the chain corresponds to glycine 745 to asparagine 750. A helical membrane pass occupies residues threonine 751 to valine 771. Residues glutamine 772–methionine 1193 are Extracellular-facing. Intrachain disulfides connect cysteine 777–cysteine 788, cysteine 828–cysteine 916, cysteine 952–cysteine 996, cysteine 1053–cysteine 1102, cysteine 1064–cysteine 1086, and cysteine 1085–cysteine 1089. 2 N-linked (GlcNAc...) asparagine; by host glycosylation sites follow: asparagine 903 and asparagine 980. N-linked (GlcNAc...) asparagine; by host glycosylation is found at asparagine 1132 and asparagine 1188. Residues glycine 1194–leucine 1218 form a helical membrane-spanning segment. Residues arginine 1219–arginine 1224 are Cytoplasmic-facing. The chain crosses the membrane as a helical span at residues glutamate 1225–glutamate 1243. Topologically, residues aspartate 1244 to threonine 1267 are lumenal. The chain crosses the membrane as a helical span at residues tyrosine 1268–valine 1288. Position 1289 (alanine 1289) is a topological domain, cytoplasmic. The helical transmembrane segment at tryptophan 1290 to serine 1308 threads the bilayer. The Lumenal segment spans residues serine 1309–aspartate 1315. A helical transmembrane segment spans residues tryptophan 1316–leucine 1336. At lysine 1337–serine 1344 the chain is on the cytoplasmic side. A helical membrane pass occupies residues tryptophan 1345 to leucine 1365. At arginine 1366–aspartate 1368 the chain is on the lumenal side. A helical transmembrane segment spans residues valine 1369–glycine 1389. Over threonine 1390 to lysine 1443 the chain is Cytoplasmic. Residues valine 1396 to glutamate 1435 are interacts with and activates NS3 protease. An intramembrane region (helical) is located at residues threonine 1444 to tryptophan 1464. Over histidine 1465–threonine 2146 the chain is Cytoplasmic. A Peptidase S7 domain is found at serine 1474–glutamate 1651. Active-site charge relay system; for serine protease NS3 activity residues include histidine 1524, aspartate 1548, and serine 1608. The 157-residue stretch at glutamate 1654 to glutamate 1810 folds into the Helicase ATP-binding domain. The important for RNA-binding stretch occupies residues lysine 1658–asparagine 1661. Position 1667-1674 (leucine 1667–threonine 1674) interacts with ATP. Residues aspartate 1758–histidine 1761 carry the DEAH box motif. Positions serine 1820–glutamate 1986 constitute a Helicase C-terminal domain. Lysine 1862 carries the N6-acetyllysine; by host modification. Residues leucine 2147 to glycine 2167 traverse the membrane as a helical segment. The Lumenal segment spans residues lysine 2168–glycine 2169. An intramembrane region (helical) is located at residues isoleucine 2170–alanine 2190. Residue glutamate 2191 is a topological domain, lumenal. A helical transmembrane segment spans residues valine 2192–isoleucine 2212. Residues proline 2213–alanine 2227 are Cytoplasmic-facing. The helical transmembrane segment at tyrosine 2228–leucine 2248 threads the bilayer. The Lumenal portion of the chain corresponds to glutamate 2249–aspartate 2273. Residues leucine 2274–leucine 2294 constitute an intramembrane region (helical). At arginine 2295–valine 2305 the chain is on the lumenal side. N-linked (GlcNAc...) asparagine; by host glycosylation is found at asparagine 2300 and asparagine 2304. An intramembrane region (helical) is located at residues serine 2306–isoleucine 2326. Topologically, residues serine 2327–proline 2346 are lumenal. A helical membrane pass occupies residues leucine 2347–leucine 2367. Residues glutamine 2368–glutamine 2412 lie on the Cytoplasmic side of the membrane. A helical membrane pass occupies residues valine 2413–cysteine 2433. Over glutamate 2434 to threonine 2458 the chain is Lumenal. A glycan (N-linked (GlcNAc...) asparagine; by host) is linked at asparagine 2456. A helical transmembrane segment spans residues isoleucine 2459–phenylalanine 2479. Topologically, residues serine 2480 to tryptophan 3390 are cytoplasmic. One can recognise an mRNA cap 0-1 NS5-type MT domain in the interval threonine 2492–histidine 2753. An S-adenosyl-L-methionine-binding site is contributed by serine 2546. Serine 2546 carries the post-translational modification Phosphoserine. Lysine 2551 (for 2'-O-MTase activity) is an active-site residue. An SUMO-interacting motif motif is present at residues valine 2567–leucine 2570. Glycine 2576, tryptophan 2577, threonine 2594, lysine 2595, aspartate 2621, and valine 2622 together coordinate S-adenosyl-L-methionine. Aspartate 2636 functions as the For 2'-O-MTase activity in the catalytic mechanism. Isoleucine 2637 provides a ligand contact to S-adenosyl-L-methionine. Residues lysine 2670 and glutamate 2706 each act as for 2'-O-MTase activity in the active site. Residue tyrosine 2708 participates in S-adenosyl-L-methionine binding. The Zn(2+) site is built by glutamate 2927, histidine 2931, cysteine 2936, and cysteine 2939. In terms of domain architecture, RdRp catalytic spans alanine 3018 to leucine 3168. Zn(2+) contacts are provided by histidine 3202, cysteine 3218, and cysteine 3337.

The protein in the N-terminal section; belongs to the class I-like SAM-binding methyltransferase superfamily. mRNA cap 0-1 NS5-type methyltransferase family. As to quaternary structure, homodimer. Interacts (via N-terminus) with host EXOC1 (via C-terminus); this interaction results in EXOC1 degradation through the proteasome degradation pathway. In terms of assembly, forms heterodimers with envelope protein E in the endoplasmic reticulum and Golgi. Homodimer; in the endoplasmic reticulum and Golgi. Interacts with protein prM. Interacts with non-structural protein 1. As to quaternary structure, homodimer; Homohexamer when secreted. Interacts with envelope protein E. In terms of assembly, interacts (via N-terminus) with serine protease NS3. Forms a heterodimer with serine protease NS3. May form homooligomers. As to quaternary structure, forms a heterodimer with NS2B. Interacts with NS4B. Interacts with unphosphorylated RNA-directed RNA polymerase NS5; this interaction stimulates RNA-directed RNA polymerase NS5 guanylyltransferase activity. Interacts with host SHFL. In terms of assembly, interacts with host MAVS; this interaction inhibits the synthesis of IFN-beta. Interacts with host SHFL. Interacts with host AUP1; the interaction occurs in the presence of Dengue virus NS4B and induces lipophagy which facilitates production of virus progeny particles. Interacts with serine protease NS3. As to quaternary structure, homodimer. Interacts with host STAT2; this interaction inhibits the phosphorylation of the latter, and, when all viral proteins are present (polyprotein), targets STAT2 for degradation. Interacts with serine protease NS3. In terms of processing, specific enzymatic cleavages in vivo yield mature proteins. Cleavages in the lumen of endoplasmic reticulum are performed by host signal peptidase, whereas cleavages in the cytoplasmic side are performed by serine protease NS3. Signal cleavage at the 2K-4B site requires a prior NS3 protease-mediated cleavage at the 4A-2K site. Cleaved in post-Golgi vesicles by a host furin, releasing the mature small envelope protein M, and peptide pr. This cleavage is incomplete as up to 30% of viral particles still carry uncleaved prM. Post-translationally, N-glycosylated. In terms of processing, N-glycosylated. The excreted form is glycosylated and this is required for efficient secretion of the protein from infected cells. Acetylated by host KAT5. Acetylation modulates NS3 RNA-binding and unwinding activities and plays an important positive role for viral replication. Post-translationally, sumoylation of RNA-directed RNA polymerase NS5 increases NS5 protein stability allowing proper viral RNA replication. In terms of processing, phosphorylated on serines residues. This phosphorylation may trigger NS5 nuclear localization.

The protein localises to the virion. Its subcellular location is the host nucleus. It localises to the host cytoplasm. It is found in the host perinuclear region. The protein resides in the secreted. The protein localises to the virion membrane. Its subcellular location is the host endoplasmic reticulum membrane. It localises to the host mitochondrion. It catalyses the reaction Selective hydrolysis of -Xaa-Xaa-|-Yaa- bonds in which each of the Xaa can be either Arg or Lys and Yaa can be either Ser or Ala.. The enzyme catalyses RNA(n) + a ribonucleoside 5'-triphosphate = RNA(n+1) + diphosphate. The catalysed reaction is a ribonucleoside 5'-triphosphate + H2O = a ribonucleoside 5'-diphosphate + phosphate + H(+). It carries out the reaction ATP + H2O = ADP + phosphate + H(+). It catalyses the reaction a 5'-end (5'-triphosphoguanosine)-ribonucleoside in mRNA + S-adenosyl-L-methionine = a 5'-end (N(7)-methyl 5'-triphosphoguanosine)-ribonucleoside in mRNA + S-adenosyl-L-homocysteine. The enzyme catalyses a 5'-end (N(7)-methyl 5'-triphosphoguanosine)-ribonucleoside in mRNA + S-adenosyl-L-methionine = a 5'-end (N(7)-methyl 5'-triphosphoguanosine)-(2'-O-methyl-ribonucleoside) in mRNA + S-adenosyl-L-homocysteine + H(+). Its function is as follows. Plays a role in virus budding by binding to the cell membrane and gathering the viral RNA into a nucleocapsid that forms the core of a mature virus particle. During virus entry, may induce genome penetration into the host cytoplasm after hemifusion induced by the surface proteins. Can migrate to the cell nucleus where it modulates host functions. Overcomes the anti-viral effects of host EXOC1 by sequestering and degrading the latter through the proteasome degradation pathway. In terms of biological role, inhibits RNA silencing by interfering with host Dicer. Prevents premature fusion activity of envelope proteins in trans-Golgi by binding to envelope protein E at pH6.0. After virion release in extracellular space, gets dissociated from E dimers. Functionally, acts as a chaperone for envelope protein E during intracellular virion assembly by masking and inactivating envelope protein E fusion peptide. prM is the only viral peptide matured by host furin in the trans-Golgi network probably to avoid catastrophic activation of the viral fusion activity in acidic Golgi compartment prior to virion release. prM-E cleavage is inefficient, and many virions are only partially matured. These uncleaved prM would play a role in immune evasion. Its function is as follows. May play a role in virus budding. Exerts cytotoxic effects by activating a mitochondrial apoptotic pathway through M ectodomain. May display a viroporin activity. In terms of biological role, binds to host cell surface receptor and mediates fusion between viral and cellular membranes. Envelope protein is synthesized in the endoplasmic reticulum in the form of heterodimer with protein prM. They play a role in virion budding in the ER, and the newly formed immature particle is covered with 60 spikes composed of heterodimer between precursor prM and envelope protein E. The virion is transported to the Golgi apparatus where the low pH causes dissociation of PrM-E heterodimers and formation of E homodimers. prM-E cleavage is inefficient, and many virions are only partially matured. These uncleaved prM would play a role in immune evasion. Involved in immune evasion, pathogenesis and viral replication. Once cleaved off the polyprotein, is targeted to three destinations: the viral replication cycle, the plasma membrane and the extracellular compartment. Essential for viral replication. Required for formation of the replication complex and recruitment of other non-structural proteins to the ER-derived membrane structures. Excreted as a hexameric lipoparticle that plays a role against host immune response. Antagonizing the complement function. Binds to the host macrophages and dendritic cells. Inhibits signal transduction originating from Toll-like receptor 3 (TLR3). Functionally, disrupts the host endothelial glycocalyx layer of host pulmonary microvascular endothelial cells, inducing degradation of sialic acid and shedding of heparan sulfate proteoglycans. NS1 induces expression of sialidases, heparanase, and activates cathepsin L, which activates heparanase via enzymatic cleavage. These effects are probably linked to the endothelial hyperpermeability observed in severe dengue disease. Its function is as follows. Component of the viral RNA replication complex that functions in virion assembly and antagonizes the host immune response. In terms of biological role, required cofactor for the serine protease function of NS3. May have membrane-destabilizing activity and form viroporins. Displays three enzymatic activities: serine protease, NTPase and RNA helicase. NS3 serine protease, in association with NS2B, performs its autocleavage and cleaves the polyprotein at dibasic sites in the cytoplasm: C-prM, NS2A-NS2B, NS2B-NS3, NS3-NS4A, NS4A-2K and NS4B-NS5. NS3 RNA helicase binds RNA and unwinds dsRNA in the 3' to 5' direction. Functionally, regulates the ATPase activity of the NS3 helicase activity. NS4A allows NS3 helicase to conserve energy during unwinding. Plays a role in the inhibition of the host innate immune response. Interacts with host MAVS and thereby prevents the interaction between RIGI and MAVS. In turn, IFN-beta production is impaired. Interacts with host AUP1 which mediates induction of lipophagy in host cells and facilitates production of virus progeny particles. Its function is as follows. Functions as a signal peptide for NS4B and is required for the interferon antagonism activity of the latter. In terms of biological role, induces the formation of ER-derived membrane vesicles where the viral replication takes place. Inhibits interferon (IFN)-induced host STAT1 phosphorylation and nuclear translocation, thereby preventing the establishment of cellular antiviral state by blocking the IFN-alpha/beta pathway. Replicates the viral (+) and (-) RNA genome, and performs the capping of genomes in the cytoplasm. NS5 methylates viral RNA cap at guanine N-7 and ribose 2'-O positions. Besides its role in RNA genome replication, also prevents the establishment of cellular antiviral state by blocking the interferon-alpha/beta (IFN-alpha/beta) signaling pathway. Inhibits host TYK2 and STAT2 phosphorylation, thereby preventing activation of JAK-STAT signaling pathway. The protein is Genome polyprotein (pol) of Dengue virus type 3 (strain Sri Lanka/1266/2000) (DENV-3).